Here is a 194-residue protein sequence, read N- to C-terminus: Small ribosomal subunit protein uS4c (194 aa).

Residues 84–144 enclose the S4 RNA-binding domain; it reads MRLDTLLYRT…KEILKSLNDK (61 aa).

This sequence belongs to the universal ribosomal protein uS4 family. Part of the 30S ribosomal subunit. Contacts protein S5. The interaction surface between S4 and S5 is involved in control of translational fidelity.

The protein resides in the plastid. It localises to the chloroplast. Its function is as follows. One of the primary rRNA binding proteins, it binds directly to 16S rRNA where it nucleates assembly of the body of the 30S subunit. In terms of biological role, with S5 and S12 plays an important role in translational accuracy. The protein is Small ribosomal subunit protein uS4c (rps4) of Bigelowiella natans (Pedinomonas minutissima).